We begin with the raw amino-acid sequence, 297 residues long: N-acetylneuraminate lyase (297 aa).

Aceneuramate contacts are provided by S47 and T48. The active-site Proton donor is the Y137. K165 serves as the catalytic Schiff-base intermediate with substrate. Aceneuramate is bound by residues T167, G189, D191, E192, and S208.

This sequence belongs to the DapA family. NanA subfamily. In terms of assembly, homotetramer.

Its subcellular location is the cytoplasm. The catalysed reaction is aceneuramate = aldehydo-N-acetyl-D-mannosamine + pyruvate. Its pathway is amino-sugar metabolism; N-acetylneuraminate degradation; D-fructose 6-phosphate from N-acetylneuraminate: step 1/5. Its function is as follows. Catalyzes the reversible aldol cleavage of N-acetylneuraminic acid (sialic acid; Neu5Ac) to form pyruvate and N-acetylmannosamine (ManNAc) via a Schiff base intermediate. The chain is N-acetylneuraminate lyase from Citrobacter koseri (strain ATCC BAA-895 / CDC 4225-83 / SGSC4696).